We begin with the raw amino-acid sequence, 500 residues long: 7-alpha-hydroxycholest-4-en-3-one 12-alpha-hydroxylase (500 aa).

The chain crosses the membrane as a helical span at residues 2–21 (VLWGLLGALLMVMVGWLCLP). The residue at position 325 (serine 325) is a Phosphoserine. Cysteine 439 serves as a coordination point for heme.

It belongs to the cytochrome P450 family. The cofactor is heme. In terms of tissue distribution, liver (at protein level).

It is found in the endoplasmic reticulum membrane. The protein resides in the microsome membrane. It carries out the reaction 7alpha-hydroxycholest-4-en-3-one + reduced [NADPH--hemoprotein reductase] + O2 = 7alpha,12alpha-dihydroxycholest-4-en-3-one + oxidized [NADPH--hemoprotein reductase] + H2O + H(+). The enzyme catalyses 5beta-cholestane-3alpha,7alpha-diol + reduced [NADPH--hemoprotein reductase] + O2 = 5beta-cholestane-3alpha,7alpha,12alpha-triol + oxidized [NADPH--hemoprotein reductase] + H2O + H(+). It catalyses the reaction chenodeoxycholate + reduced [NADPH--hemoprotein reductase] + O2 = cholate + oxidized [NADPH--hemoprotein reductase] + H2O + H(+). It participates in lipid metabolism; bile acid biosynthesis. Up-regulated upon treatment with streptozotocin. In terms of biological role, a cytochrome P450 monooxygenase involved in primary bile acid biosynthesis. Catalyzes the 12alpha-hydroxylation of 7alpha-hydroxy-4-cholesten-3-one, an intermediate metabolite in cholic acid biosynthesis. Controls biliary balance of cholic acid and chenodeoxycholic acid, ultimately regulating the intestinal absorption of dietary lipids. Mechanistically, uses molecular oxygen inserting one oxygen atom into a substrate, and reducing the second into a water molecule, with two electrons provided by NADPH via cytochrome P450 reductase (CPR; NADPH--hemoprotein reductase). This Oryctolagus cuniculus (Rabbit) protein is 7-alpha-hydroxycholest-4-en-3-one 12-alpha-hydroxylase (CYP8B1).